The following is a 169-amino-acid chain: Crossover junction endodeoxyribonuclease RuvC (169 aa).

Active-site residues include aspartate 11, glutamate 71, and aspartate 143. Residues aspartate 11, glutamate 71, and aspartate 143 each contribute to the Mg(2+) site.

Belongs to the RuvC family. In terms of assembly, homodimer which binds Holliday junction (HJ) DNA. The HJ becomes 2-fold symmetrical on binding to RuvC with unstacked arms; it has a different conformation from HJ DNA in complex with RuvA. In the full resolvosome a probable DNA-RuvA(4)-RuvB(12)-RuvC(2) complex forms which resolves the HJ. Mg(2+) serves as cofactor.

The protein localises to the cytoplasm. The catalysed reaction is Endonucleolytic cleavage at a junction such as a reciprocal single-stranded crossover between two homologous DNA duplexes (Holliday junction).. The RuvA-RuvB-RuvC complex processes Holliday junction (HJ) DNA during genetic recombination and DNA repair. Endonuclease that resolves HJ intermediates. Cleaves cruciform DNA by making single-stranded nicks across the HJ at symmetrical positions within the homologous arms, yielding a 5'-phosphate and a 3'-hydroxyl group; requires a central core of homology in the junction. The consensus cleavage sequence is 5'-(A/T)TT(C/G)-3'. Cleavage occurs on the 3'-side of the TT dinucleotide at the point of strand exchange. HJ branch migration catalyzed by RuvA-RuvB allows RuvC to scan DNA until it finds its consensus sequence, where it cleaves and resolves the cruciform DNA. The chain is Crossover junction endodeoxyribonuclease RuvC from Rhizobium johnstonii (strain DSM 114642 / LMG 32736 / 3841) (Rhizobium leguminosarum bv. viciae).